We begin with the raw amino-acid sequence, 684 residues long: Extracellular lipase (684 aa).

The signal sequence occupies residues 1 to 48 (MKKKLIYAAVVSALLAGCGGSDDNKGDTSSYLDYLLTGSNAVGPSALA). Disordered stretches follow at residues 321-405 (SIPV…ADWG) and 462-493 (QRER…GDRS). Over residues 385–405 (ADCRSDPPERAAGRGEQADWG) the composition is skewed to basic and acidic residues. Catalysis depends on Ser-568, which acts as the Nucleophile.

The protein belongs to the AB hydrolase superfamily. Lipase family. In terms of assembly, monomer.

The protein localises to the secreted. The enzyme catalyses a triacylglycerol + H2O = a diacylglycerol + a fatty acid + H(+). Functionally, the optimum chain lengths for the acyl moiety is C6 for ester hydrolysis and C6 and C8 for triacylglycerol hydrolysis. This is Extracellular lipase from Aeromonas hydrophila.